A 183-amino-acid chain; its full sequence is dCTP deaminase (183 aa).

DCTP contacts are provided by residues 97-102 (RSSFAR) and Asp-113. Glu-123 (proton donor/acceptor) is an active-site residue. DCTP-binding residues include Tyr-155 and Gln-162.

Belongs to the dCTP deaminase family. As to quaternary structure, homotrimer.

It catalyses the reaction dCTP + H2O + H(+) = dUTP + NH4(+). It participates in pyrimidine metabolism; dUMP biosynthesis; dUMP from dCTP (dUTP route): step 1/2. In terms of biological role, catalyzes the deamination of dCTP to dUTP. The sequence is that of dCTP deaminase from Sulfurisphaera tokodaii (strain DSM 16993 / JCM 10545 / NBRC 100140 / 7) (Sulfolobus tokodaii).